A 353-amino-acid chain; its full sequence is Photosystem II D2 protein (353 aa).

Residue threonine 2 is modified to N-acetylthreonine. Threonine 2 bears the Phosphothreonine mark. The helical transmembrane segment at 41–61 threads the bilayer; the sequence is CAYFALGGWLTGTTFVTSWYT. Residue histidine 118 coordinates chlorophyll a. The helical transmembrane segment at 125 to 141 threads the bilayer; sequence GFMLRQFELARSVQLRP. Glutamine 130 and asparagine 143 together coordinate pheophytin a. Residues 153–166 form a helical membrane-spanning segment; the sequence is VFVSVFLIYPLGQS. Residue histidine 198 coordinates chlorophyll a. Residues 208–228 traverse the membrane as a helical segment; the sequence is AALLCAIHGATVENTLFEDGD. A plastoquinone-binding residues include histidine 215 and phenylalanine 262. Histidine 215 contributes to the Fe cation binding site. Histidine 269 provides a ligand contact to Fe cation. A helical transmembrane segment spans residues 279–295; it reads GLWMSAIGVVGLALNLR.

It belongs to the reaction center PufL/M/PsbA/D family. PSII is composed of 1 copy each of membrane proteins PsbA, PsbB, PsbC, PsbD, PsbE, PsbF, PsbH, PsbI, PsbJ, PsbK, PsbL, PsbM, PsbT, PsbX, PsbY, PsbZ, Psb30/Ycf12, at least 3 peripheral proteins of the oxygen-evolving complex and a large number of cofactors. It forms dimeric complexes. It depends on The D1/D2 heterodimer binds P680, chlorophylls that are the primary electron donor of PSII, and subsequent electron acceptors. It shares a non-heme iron and each subunit binds pheophytin, quinone, additional chlorophylls, carotenoids and lipids. There is also a Cl(-1) ion associated with D1 and D2, which is required for oxygen evolution. The PSII complex binds additional chlorophylls, carotenoids and specific lipids. as a cofactor.

Its subcellular location is the plastid. It localises to the chloroplast thylakoid membrane. The enzyme catalyses 2 a plastoquinone + 4 hnu + 2 H2O = 2 a plastoquinol + O2. Functionally, photosystem II (PSII) is a light-driven water:plastoquinone oxidoreductase that uses light energy to abstract electrons from H(2)O, generating O(2) and a proton gradient subsequently used for ATP formation. It consists of a core antenna complex that captures photons, and an electron transfer chain that converts photonic excitation into a charge separation. The D1/D2 (PsbA/PsbD) reaction center heterodimer binds P680, the primary electron donor of PSII as well as several subsequent electron acceptors. D2 is needed for assembly of a stable PSII complex. The protein is Photosystem II D2 protein of Zygnema circumcarinatum (Green alga).